A 391-amino-acid polypeptide reads, in one-letter code: Elongation factor Tu (391 aa).

Positions 10–201 (KPHVNIGTIG…AVDDYIPTPE (192 aa)) constitute a tr-type G domain. The tract at residues 19-26 (GHVDHGKT) is G1. Position 19-26 (19-26 (GHVDHGKT)) interacts with GTP. Threonine 26 contributes to the Mg(2+) binding site. A G2 region spans residues 55–59 (GITIS). The segment at 76–79 (DCPG) is G3. Residues 76-80 (DCPGH) and 131-134 (NKCD) contribute to the GTP site. The G4 stretch occupies residues 131 to 134 (NKCD). The interval 169 to 171 (SAL) is G5.

Belongs to the TRAFAC class translation factor GTPase superfamily. Classic translation factor GTPase family. EF-Tu/EF-1A subfamily. As to quaternary structure, monomer.

The protein localises to the cytoplasm. It carries out the reaction GTP + H2O = GDP + phosphate + H(+). Its function is as follows. GTP hydrolase that promotes the GTP-dependent binding of aminoacyl-tRNA to the A-site of ribosomes during protein biosynthesis. The protein is Elongation factor Tu of Brucella anthropi (strain ATCC 49188 / DSM 6882 / CCUG 24695 / JCM 21032 / LMG 3331 / NBRC 15819 / NCTC 12168 / Alc 37) (Ochrobactrum anthropi).